The primary structure comprises 298 residues: MEDRYGREIRSFRLSITPKCNLKCFYCHKEGRNEEHGKLMSADEIVKIVKSSLEFGVRKIKISGGEPLLRTDLPKIIENIKDDQIKDISLTTNGILLEKYAQKLKDAGLDRVNVSLDTLDPVQYKKITAGGNIESVKKGIEKAIEVGLTPLKVNFLAMDCTVKQLPAIMDYCRKIGAILQIIEFIPMEPELKHHHIDVIPIEKEIAKKADQVFTRKFMQNRKKYVIDGLEVEFVRPMDNTEFCGHCTRIRLTYDGYLKPCLLRDDNLVDVANPVRNGEDIRKYFIKCIEEREPFCKAQ.

The Radical SAM core domain occupies 4–227 (RYGREIRSFR…MQNRKKYVID (224 aa)). Position 13 (Arg13) interacts with GTP. The [4Fe-4S] cluster site is built by Cys20 and Cys24. An S-adenosyl-L-methionine-binding site is contributed by Tyr26. Cys27 contributes to the [4Fe-4S] cluster binding site. Lys61 is a binding site for GTP. Gly65 contacts S-adenosyl-L-methionine. A GTP-binding site is contributed by Thr91. Ser115 serves as a coordination point for S-adenosyl-L-methionine. Residue Lys152 coordinates GTP. Positions 243 and 246 each coordinate [4Fe-4S] cluster. GTP is bound at residue 248 to 250 (RIR). Residue Cys260 participates in [4Fe-4S] cluster binding.

The protein belongs to the radical SAM superfamily. MoaA family. Requires [4Fe-4S] cluster as cofactor.

It carries out the reaction GTP + AH2 + S-adenosyl-L-methionine = (8S)-3',8-cyclo-7,8-dihydroguanosine 5'-triphosphate + 5'-deoxyadenosine + L-methionine + A + H(+). It functions in the pathway cofactor biosynthesis; molybdopterin biosynthesis. In terms of biological role, catalyzes the cyclization of GTP to (8S)-3',8-cyclo-7,8-dihydroguanosine 5'-triphosphate. The polypeptide is Probable GTP 3',8-cyclase (Methanococcus maripaludis (strain C6 / ATCC BAA-1332)).